The sequence spans 301 residues: Homoserine O-acetyltransferase (301 aa).

Cys-142 serves as the catalytic Acyl-thioester intermediate. Substrate contacts are provided by Lys-163 and Ser-192. Residue His-235 is the Proton acceptor of the active site. Glu-237 is an active-site residue. Arg-249 is a binding site for substrate.

This sequence belongs to the MetA family.

The protein localises to the cytoplasm. It catalyses the reaction L-homoserine + acetyl-CoA = O-acetyl-L-homoserine + CoA. It functions in the pathway amino-acid biosynthesis; L-methionine biosynthesis via de novo pathway; O-acetyl-L-homoserine from L-homoserine: step 1/1. Functionally, transfers an acetyl group from acetyl-CoA to L-homoserine, forming acetyl-L-homoserine. This Bacillus thuringiensis subsp. konkukian (strain 97-27) protein is Homoserine O-acetyltransferase.